A 461-amino-acid chain; its full sequence is Photosystem II CP43 reaction center protein (461 aa).

Residues 1–2 constitute a propeptide that is removed on maturation; the sequence is ME. An N-acetylthreonine modification is found at threonine 3. Threonine 3 is subject to Phosphothreonine. 5 consecutive transmembrane segments (helical) span residues 57-81, 122-143, 166-188, 243-263, and 279-300; these read LFEV…PHLA, LLGP…KDRN, KALY…RKIT, KPFA…LSYS, and WFNN…ASQA. Glutamate 355 contributes to the [CaMn4O5] cluster binding site. A helical transmembrane segment spans residues 435 to 459; the sequence is RARAAAAGFEKGIDRDLEPVLFMTP.

It belongs to the PsbB/PsbC family. PsbC subfamily. PSII is composed of 1 copy each of membrane proteins PsbA, PsbB, PsbC, PsbD, PsbE, PsbF, PsbH, PsbI, PsbJ, PsbK, PsbL, PsbM, PsbT, PsbX, PsbY, PsbZ, Psb30/Ycf12, at least 3 peripheral proteins of the oxygen-evolving complex and a large number of cofactors. It forms dimeric complexes. The cofactor is Binds multiple chlorophylls and provides some of the ligands for the Ca-4Mn-5O cluster of the oxygen-evolving complex. It may also provide a ligand for a Cl- that is required for oxygen evolution. PSII binds additional chlorophylls, carotenoids and specific lipids..

It is found in the plastid. Its subcellular location is the chloroplast thylakoid membrane. One of the components of the core complex of photosystem II (PSII). It binds chlorophyll and helps catalyze the primary light-induced photochemical processes of PSII. PSII is a light-driven water:plastoquinone oxidoreductase, using light energy to abstract electrons from H(2)O, generating O(2) and a proton gradient subsequently used for ATP formation. This Nandina domestica (Heavenly bamboo) protein is Photosystem II CP43 reaction center protein.